The sequence spans 520 residues: Non-structural protein PNS7 (520 aa).

The chain is Non-structural protein PNS7 (S6) from Catharanthus roseus (Madagascar periwinkle).